The chain runs to 441 residues: tRNA-2-methylthio-N(6)-dimethylallyladenosine synthase (441 aa).

The 117-residue stretch at lysine 3–glutamine 119 folds into the MTTase N-terminal domain. [4Fe-4S] cluster-binding residues include cysteine 12, cysteine 48, cysteine 82, cysteine 155, cysteine 159, and cysteine 162. Positions arginine 141–glutamate 371 constitute a Radical SAM core domain. Positions glycine 374–aspartate 437 constitute a TRAM domain.

This sequence belongs to the methylthiotransferase family. MiaB subfamily. As to quaternary structure, monomer. The cofactor is [4Fe-4S] cluster.

It localises to the cytoplasm. The catalysed reaction is N(6)-dimethylallyladenosine(37) in tRNA + (sulfur carrier)-SH + AH2 + 2 S-adenosyl-L-methionine = 2-methylsulfanyl-N(6)-dimethylallyladenosine(37) in tRNA + (sulfur carrier)-H + 5'-deoxyadenosine + L-methionine + A + S-adenosyl-L-homocysteine + 2 H(+). Functionally, catalyzes the methylthiolation of N6-(dimethylallyl)adenosine (i(6)A), leading to the formation of 2-methylthio-N6-(dimethylallyl)adenosine (ms(2)i(6)A) at position 37 in tRNAs that read codons beginning with uridine. The protein is tRNA-2-methylthio-N(6)-dimethylallyladenosine synthase of Prosthecochloris aestuarii (strain DSM 271 / SK 413).